The following is a 307-amino-acid chain: Ribonuclease Z (307 aa).

Residues His-61, His-63, Asp-65, His-66, His-138, Asp-207, and His-265 each coordinate Zn(2+). Asp-65 (proton acceptor) is an active-site residue.

The protein belongs to the RNase Z family. As to quaternary structure, homodimer. Zn(2+) is required as a cofactor.

It carries out the reaction Endonucleolytic cleavage of RNA, removing extra 3' nucleotides from tRNA precursor, generating 3' termini of tRNAs. A 3'-hydroxy group is left at the tRNA terminus and a 5'-phosphoryl group is left at the trailer molecule.. Functionally, zinc phosphodiesterase, which displays some tRNA 3'-processing endonuclease activity. Probably involved in tRNA maturation, by removing a 3'-trailer from precursor tRNA. This chain is Ribonuclease Z, found in Methanothermobacter thermautotrophicus (strain ATCC 29096 / DSM 1053 / JCM 10044 / NBRC 100330 / Delta H) (Methanobacterium thermoautotrophicum).